The sequence spans 520 residues: Laccase-1 (520 aa).

The signal sequence occupies residues 1-19 (MRLSNALVLVAACISSVVA). Plastocyanin-like domains lie at 21–145 (TRTF…FIVY), 157–305 (VDDE…LTLA), and 375–488 (TVPV…FAEA). Cu cation contacts are provided by His82 and His84. 2 cysteine pairs are disulfide-bonded: Cys103–Cys509 and Cys135–Cys229. Asn108 carries an N-linked (GlcNAc...) asparagine glycan. Residues His127 and His129 each contribute to the Cu cation site. Residues Asn239 and Asn299 are each glycosylated (N-linked (GlcNAc...) asparagine). The Cu cation site is built by His417, His420, His422, His470, Cys471, His472, and His476. Asn492 is a glycosylation site (N-linked (GlcNAc...) asparagine).

Belongs to the multicopper oxidase family. The cofactor is Cu cation.

The protein resides in the secreted. The enzyme catalyses 4 hydroquinone + O2 = 4 benzosemiquinone + 2 H2O. Functionally, lignin degradation and detoxification of lignin-derived products. This chain is Laccase-1 (lcc1), found in Agaricus bisporus (White button mushroom).